The following is a 102-amino-acid chain: Urease subunit beta (102 aa).

This sequence belongs to the urease beta subunit family. Heterotrimer of UreA (gamma), UreB (beta) and UreC (alpha) subunits. Three heterotrimers associate to form the active enzyme.

The protein localises to the cytoplasm. The enzyme catalyses urea + 2 H2O + H(+) = hydrogencarbonate + 2 NH4(+). It participates in nitrogen metabolism; urea degradation; CO(2) and NH(3) from urea (urease route): step 1/1. This Acinetobacter baumannii (strain AB307-0294) protein is Urease subunit beta.